Consider the following 251-residue polypeptide: Segregation and condensation protein A (251 aa).

It belongs to the ScpA family. In terms of assembly, component of a cohesin-like complex composed of ScpA, ScpB and the Smc homodimer, in which ScpA and ScpB bind to the head domain of Smc. The presence of the three proteins is required for the association of the complex with DNA.

The protein resides in the cytoplasm. In terms of biological role, participates in chromosomal partition during cell division. May act via the formation of a condensin-like complex containing Smc and ScpB that pull DNA away from mid-cell into both cell halves. In Bacillus licheniformis (strain ATCC 14580 / DSM 13 / JCM 2505 / CCUG 7422 / NBRC 12200 / NCIMB 9375 / NCTC 10341 / NRRL NRS-1264 / Gibson 46), this protein is Segregation and condensation protein A.